A 180-amino-acid chain; its full sequence is UPF0340 protein YwlG (180 aa).

The protein belongs to the UPF0340 family.

This chain is UPF0340 protein YwlG (ywlG), found in Bacillus subtilis (strain 168).